A 145-amino-acid chain; its full sequence is D-aminoacyl-tRNA deacylase (145 aa).

The Gly-cisPro motif, important for rejection of L-amino acids signature appears at 137–138; the sequence is GP.

This sequence belongs to the DTD family. In terms of assembly, homodimer.

Its subcellular location is the cytoplasm. It carries out the reaction glycyl-tRNA(Ala) + H2O = tRNA(Ala) + glycine + H(+). It catalyses the reaction a D-aminoacyl-tRNA + H2O = a tRNA + a D-alpha-amino acid + H(+). Functionally, an aminoacyl-tRNA editing enzyme that deacylates mischarged D-aminoacyl-tRNAs. Also deacylates mischarged glycyl-tRNA(Ala), protecting cells against glycine mischarging by AlaRS. Acts via tRNA-based rather than protein-based catalysis; rejects L-amino acids rather than detecting D-amino acids in the active site. By recycling D-aminoacyl-tRNA to D-amino acids and free tRNA molecules, this enzyme counteracts the toxicity associated with the formation of D-aminoacyl-tRNA entities in vivo and helps enforce protein L-homochirality. In Limosilactobacillus reuteri (strain DSM 20016) (Lactobacillus reuteri), this protein is D-aminoacyl-tRNA deacylase.